Consider the following 338-residue polypeptide: MISNFGHIVKTYLSNFPKDDYPVLDTFKFVSIWLGLVLDQSQTSMRSMFKRLNLRGETVDISTFSKASKKRDVGVFREIIFSLKKELSKRKEIKQGELEIFPLDSTIVSITSKLMWNLGFHQVKVFSGINLSTGIPGGIVIHFGQGHDNKYGNETIEETPENGVAVMDRGFCDLQRIKRLQKENNKYHVLRIKNNIKLEKLANDNYMVGTGKNKIESRVVIFTHDNSEFRLVTNLPIESKEIEGVSDEKIAEIYKKRWQIELLWKFLKMHLKLNRLIAKNENAIGIQIYTCIIAYLILKLLVIPKEAGTTMLDKLRYLQAFMCEKISYVHWLRELALR.

Belongs to the transposase 11 family.

In Synechocystis sp. (strain ATCC 27184 / PCC 6803 / Kazusa), this protein is Putative transposase for insertion sequence element IS4SA.